We begin with the raw amino-acid sequence, 288 residues long: 2-methoxy-6-polyprenyl-1,4-benzoquinol methylase, mitochondrial (288 aa).

Thr68, Asp102, and Ser146 together coordinate S-adenosyl-L-methionine. The segment covering 260-270 (PITPTTSSDIP) has biased composition (low complexity). Positions 260-288 (PITPTTSSDIPAQNTSEATCEVKPEPNSA) are disordered. A compositionally biased stretch (basic and acidic residues) spans 279–288 (CEVKPEPNSA).

It belongs to the class I-like SAM-binding methyltransferase superfamily. MenG/UbiE family. Component of a multi-subunit COQ enzyme complex.

The protein localises to the mitochondrion inner membrane. It carries out the reaction a 2-methoxy-6-(all-trans-polyprenyl)benzene-1,4-diol + S-adenosyl-L-methionine = a 5-methoxy-2-methyl-3-(all-trans-polyprenyl)benzene-1,4-diol + S-adenosyl-L-homocysteine + H(+). It functions in the pathway cofactor biosynthesis; ubiquinone biosynthesis. Its function is as follows. Methyltransferase required for the conversion of 2-polyprenyl-6-methoxy-1,4-benzoquinol (DDMQH2) to 2-polyprenyl-3-methyl-6-methoxy-1,4-benzoquinol (DMQH2). The chain is 2-methoxy-6-polyprenyl-1,4-benzoquinol methylase, mitochondrial from Leishmania donovani.